Consider the following 132-residue polypeptide: L-ectoine synthase (132 aa).

It belongs to the ectoine synthase family.

It catalyses the reaction (2S)-4-acetamido-2-aminobutanoate = L-ectoine + H2O. It participates in amine and polyamine biosynthesis; ectoine biosynthesis; L-ectoine from L-aspartate 4-semialdehyde: step 3/3. Catalyzes the circularization of gamma-N-acetyl-alpha,gamma-diaminobutyric acid (ADABA) to ectoine (1,4,5,6-tetrahydro-2-methyl-4-pyrimidine carboxylic acid), which is an excellent osmoprotectant. This is L-ectoine synthase (ectC) from Streptomyces anulatus (Streptomyces chrysomallus).